The primary structure comprises 152 residues: MAAEGKSLKARAAELLSRREYTRQELVRRLAPFADSEDELNAALDELAASNWQSDDRFARQFASSKGTKFGSRRLAQEMRQRGVDSDTIREALSGQDDLASAREQWRKKFGRLPADAAEKARQYRFLAQRGFPADVIRQVLAGGADDDFYED.

This sequence belongs to the RecX family.

It is found in the cytoplasm. Modulates RecA activity. This Chromobacterium violaceum (strain ATCC 12472 / DSM 30191 / JCM 1249 / CCUG 213 / NBRC 12614 / NCIMB 9131 / NCTC 9757 / MK) protein is Regulatory protein RecX.